Here is a 145-residue protein sequence, read N- to C-terminus: D-aminoacyl-tRNA deacylase (145 aa).

The short motif at 137–138 (GP) is the Gly-cisPro motif, important for rejection of L-amino acids element.

Belongs to the DTD family. In terms of assembly, homodimer.

The protein resides in the cytoplasm. It carries out the reaction glycyl-tRNA(Ala) + H2O = tRNA(Ala) + glycine + H(+). The catalysed reaction is a D-aminoacyl-tRNA + H2O = a tRNA + a D-alpha-amino acid + H(+). Its function is as follows. An aminoacyl-tRNA editing enzyme that deacylates mischarged D-aminoacyl-tRNAs. Also deacylates mischarged glycyl-tRNA(Ala), protecting cells against glycine mischarging by AlaRS. Acts via tRNA-based rather than protein-based catalysis; rejects L-amino acids rather than detecting D-amino acids in the active site. By recycling D-aminoacyl-tRNA to D-amino acids and free tRNA molecules, this enzyme counteracts the toxicity associated with the formation of D-aminoacyl-tRNA entities in vivo and helps enforce protein L-homochirality. This chain is D-aminoacyl-tRNA deacylase, found in Cronobacter sakazakii (strain ATCC BAA-894) (Enterobacter sakazakii).